The following is a 351-amino-acid chain: Fe-S cluster assembly protein DRE2 (351 aa).

Residues 1–151 (MATTGRVLLL…KPDIGAQQAI (151 aa)) are N-terminal SAM-like domain. 2 disordered regions span residues 93 to 118 (RNRE…RYND) and 157 to 186 (RRRK…PSSN). Polar residues-rich tracts occupy residues 105–114 (GNGSNANSSR) and 167–186 (TLAS…PSSN). A linker region spans residues 152–243 (PLKLSRRRKE…EDELLDEDDM (92 aa)). The [2Fe-2S] cluster site is built by cysteine 253, cysteine 264, cysteine 267, and cysteine 269. Residues 253-269 (CRPKPGKRRRACKDCSC) form a fe-S binding site A region. [4Fe-4S] cluster contacts are provided by cysteine 314, cysteine 317, cysteine 325, and cysteine 328. 2 consecutive short sequence motifs (cx2C motif) follow at residues 314-317 (CGNC) and 325-328 (CDGC). Residues 314–328 (CGNCSLGDAFRCDGC) form a fe-S binding site B region.

This sequence belongs to the anamorsin family. In terms of assembly, monomer. Interacts with TAH18. Interacts with MIA40. The cofactor is [2Fe-2S] cluster. Requires [4Fe-4S] cluster as cofactor.

It is found in the cytoplasm. It localises to the mitochondrion intermembrane space. In terms of biological role, component of the cytosolic iron-sulfur (Fe-S) protein assembly (CIA) machinery required for the maturation of extramitochondrial Fe-S proteins. Part of an electron transfer chain functioning in an early step of cytosolic Fe-S biogenesis, facilitating the de novo assembly of a [4Fe-4S] cluster on the scaffold complex CFD1-NBP35. Electrons are transferred to DRE2 from NADPH via the FAD- and FMN-containing protein TAH18. TAH18-DRE2 are also required for the assembly of the diferric tyrosyl radical cofactor of ribonucleotide reductase (RNR), probably by providing electrons for reduction during radical cofactor maturation in the catalytic small subunit RNR2. In Ajellomyces capsulatus (strain NAm1 / WU24) (Darling's disease fungus), this protein is Fe-S cluster assembly protein DRE2.